We begin with the raw amino-acid sequence, 967 residues long: uncharacterized protein (967 aa).

The first 29 residues, 1–29 (MKKKLKSVLIWFLIFTFNLSLGSFREVFA), serve as a signal peptide directing secretion. 2 BIG2 domains span residues 38–107 (TAIT…QDGS) and 133–190 (LPVG…VNDG).

This is an uncharacterized protein from Clostridium acetobutylicum (strain ATCC 824 / DSM 792 / JCM 1419 / IAM 19013 / LMG 5710 / NBRC 13948 / NRRL B-527 / VKM B-1787 / 2291 / W).